The chain runs to 539 residues: Phosphoenolpyruvate carboxykinase (ATP) (539 aa).

Arg-64, Tyr-206, and Lys-212 together coordinate substrate. ATP-binding positions include Lys-212, His-231, and 247–255 (GLSGTGKTT). Residues Lys-212 and His-231 each contribute to the Mn(2+) site. Asp-268 is a Mn(2+) binding site. ATP contacts are provided by residues Glu-296, Arg-332, 448-449 (RI), and Thr-454. Arg-332 is a binding site for substrate.

The protein belongs to the phosphoenolpyruvate carboxykinase (ATP) family. As to quaternary structure, monomer. The cofactor is Mn(2+).

It localises to the cytoplasm. The enzyme catalyses oxaloacetate + ATP = phosphoenolpyruvate + ADP + CO2. It functions in the pathway carbohydrate biosynthesis; gluconeogenesis. Involved in the gluconeogenesis. Catalyzes the conversion of oxaloacetate (OAA) to phosphoenolpyruvate (PEP) through direct phosphoryl transfer between the nucleoside triphosphate and OAA. The sequence is that of Phosphoenolpyruvate carboxykinase (ATP) from Yersinia pseudotuberculosis serotype O:1b (strain IP 31758).